We begin with the raw amino-acid sequence, 146 residues long: Single-stranded DNA-binding protein 1-A, mitochondrial (146 aa).

A mitochondrion-targeting transit peptide spans 1-17; sequence MFHRPALQVFRQFARCQ. Positions 28-140 constitute an SSB domain; sequence INKVQLLGRV…IIADNIIFLS (113 aa).

Homotetramer.

Its subcellular location is the mitochondrion. The protein resides in the mitochondrion matrix. It is found in the mitochondrion nucleoid. Functionally, binds preferentially and cooperatively to pyrimidine rich single-stranded DNA (ss-DNA). Required to maintain the copy number of mitochondrial DNA (mtDNA) and plays crucial roles during mtDNA replication that stimulate activity of the DNA polymerase at the replication fork. May also function in mtDNA repair. This Xenopus laevis (African clawed frog) protein is Single-stranded DNA-binding protein 1-A, mitochondrial (ssbp1-a).